A 619-amino-acid chain; its full sequence is 1-deoxy-D-xylulose-5-phosphate synthase (619 aa).

Thiamine diphosphate-binding positions include histidine 74 and 115–117; that span reads GHS. Aspartate 146 contacts Mg(2+). Thiamine diphosphate contacts are provided by residues 147–148, asparagine 175, tyrosine 285, and glutamate 365; that span reads GA. Asparagine 175 is a Mg(2+) binding site.

This sequence belongs to the transketolase family. DXPS subfamily. In terms of assembly, homodimer. It depends on Mg(2+) as a cofactor. Thiamine diphosphate serves as cofactor.

It catalyses the reaction D-glyceraldehyde 3-phosphate + pyruvate + H(+) = 1-deoxy-D-xylulose 5-phosphate + CO2. It participates in metabolic intermediate biosynthesis; 1-deoxy-D-xylulose 5-phosphate biosynthesis; 1-deoxy-D-xylulose 5-phosphate from D-glyceraldehyde 3-phosphate and pyruvate: step 1/1. In terms of biological role, catalyzes the acyloin condensation reaction between C atoms 2 and 3 of pyruvate and glyceraldehyde 3-phosphate to yield 1-deoxy-D-xylulose-5-phosphate (DXP). This chain is 1-deoxy-D-xylulose-5-phosphate synthase, found in Clostridium perfringens (strain ATCC 13124 / DSM 756 / JCM 1290 / NCIMB 6125 / NCTC 8237 / Type A).